A 603-amino-acid chain; its full sequence is Autophagy-related protein 13a (603 aa).

Ser248 bears the Phosphoserine mark. Disordered regions lie at residues 258–477 (PSPG…DDLD) and 498–518 (SHSL…PLGR). A compositionally biased stretch (polar residues) spans 301-315 (ATPNQSFSPAQSHQL). Residues 320 to 331 (HDFHWSRTDAFG) show a composition bias toward basic and acidic residues. Polar residues-rich tracts occupy residues 371–386 (IPSS…SNFS) and 419–437 (SSRS…PTQK). Residues 453–473 (LSSSDSPRFAFSRSPSRLSSQ) are compositionally biased toward low complexity.

Belongs to the ATG13 family. Plant subfamily. Interacts with ATG1A. Interacts with ATG11 and ATG101. Phosphorylated during nutrient starvation. Dephosphorylated in nutrient-rich conditions.

The protein resides in the cytoplasmic vesicle. It is found in the autophagosome. Involved in autophagy in a nutritional condition dependent manner. The ATG1-ATG13 protein kinase complex regulates downstream events required for autophagosome enclosure and/or vacuolar delivery. Becomes a target of autophagy under nutrient starvation. Connects autophagy to plant nutritional status. The polypeptide is Autophagy-related protein 13a (Arabidopsis thaliana (Mouse-ear cress)).